The following is a 439-amino-acid chain: Histidinol dehydrogenase (439 aa).

Residues Y127, Q185, and N208 each contribute to the NAD(+) site. Residues S234, Q256, and H259 each contribute to the substrate site. Positions 256 and 259 each coordinate Zn(2+). Active-site proton acceptor residues include E323 and H324. Positions 324, 357, 411, and 416 each coordinate substrate. D357 is a Zn(2+) binding site. H416 lines the Zn(2+) pocket.

It belongs to the histidinol dehydrogenase family. Zn(2+) is required as a cofactor.

It carries out the reaction L-histidinol + 2 NAD(+) + H2O = L-histidine + 2 NADH + 3 H(+). It participates in amino-acid biosynthesis; L-histidine biosynthesis; L-histidine from 5-phospho-alpha-D-ribose 1-diphosphate: step 9/9. Its function is as follows. Catalyzes the sequential NAD-dependent oxidations of L-histidinol to L-histidinaldehyde and then to L-histidine. The protein is Histidinol dehydrogenase of Aliivibrio fischeri (strain ATCC 700601 / ES114) (Vibrio fischeri).